A 550-amino-acid polypeptide reads, in one-letter code: Urocanate hydratase (550 aa).

Residues 48–49 (GG), Gln-126, 172–174 (GMG), Glu-192, Arg-197, 238–239 (NA), 259–263 (QTSAH), 268–269 (YL), and Tyr-317 contribute to the NAD(+) site. The active site involves Cys-405. Gly-487 provides a ligand contact to NAD(+).

This sequence belongs to the urocanase family. NAD(+) is required as a cofactor.

The protein resides in the cytoplasm. It catalyses the reaction 4-imidazolone-5-propanoate = trans-urocanate + H2O. Its pathway is amino-acid degradation; L-histidine degradation into L-glutamate; N-formimidoyl-L-glutamate from L-histidine: step 2/3. Functionally, catalyzes the conversion of urocanate to 4-imidazolone-5-propionate. The chain is Urocanate hydratase from Saccharopolyspora erythraea (strain ATCC 11635 / DSM 40517 / JCM 4748 / NBRC 13426 / NCIMB 8594 / NRRL 2338).